The sequence spans 1931 residues: MAQQPPPSRFLGVTDLSSLAVTEDTVLVTLQERYISHKPYTSLSPAALVFLSPYSHLPIDDEESLLHYVEEYYQCNNEEGGSRNEQGWWKKKMEQPHVFQLALSAYYNMRRTGQDQVIIASGPTGSGKSELKRLAIEAITQVSLANPGKKGSKIGLQVSSAEFILKCFGNAHTLSNDEASRFGTYTELQFNERGRLEGLKTIVYYFERSRVSQAPINGERNFHAFYYLVSGAPEEERNFLKLGDVSDYRYLNCRVRRVGVDDRHRYSQLRQAFKLMGISSRLIAQIFQLLASILHIGNLRFSPSDGIQEGASVINVETLDIVAEFLGVHSESLAEIFSLKTVLVRKEVCTTFLGPEQAEQVRDELARTLYSLLFSWINEHINTKLCKDSFGSFIALVDLPGIQRNSGSMGSFNSVDQFCLNFAAEKMHNWVLHRVHETTRQEAETERLLISRVPYFDNSECLGMLSNPRGGLISVIDDLSQKKRSESNLLESLGKRFHNHPSMSISPQGNRSSASFTINHYDGPVTYSTSNFLERNANETSTDIIQLLRGDTTSRSQVSTTEGHGSSNPFIKGLFGMKNIAMQTHPRSDSTIVAAQQSVRPVRAPSTRRKKMMSLVPVSEEGGEETSDFQVGGGNDESYSSKELHCIAGQHWAAVDSLLKSFDQTQTWYIFALRPNDSQLPSQFDLRSMKQQVRSFGLVEMAQQLQTSWEVRLSHKEACERYNEELLYRGIPEGTGDVERLRDLKRLMSLNDADMGIGLQRVFLSHDLFRFLEDRLRAKEPGEQHAYEDLGHRKLQTDPFSPHRYQPTSFDSQDHVYKDPSIRPVDSSANLPLMEHAQPIVNSSLEIEDRESSAAPYVSYGGRSITDIEGYASSRDLLASSIHKSEKDPLDTEPQAGETTEVYRESIARRRWVWLCSILTWWIPGFLLSKIAGMKRQDIRQAWREKLAINMIIWFICGCAIFVIAILGPVICPTQHVYSTNELASHSYTLDPNNAFVAIRGEVFDLSQFAPTHLTAVSVVPTKSIMQYGGLDASELLPVQVSALCGGVSGSISQYVTLDSTNTTDVYSQYHDFRAFTNDSRPDWYAEMMIMMRHRFRVGFMGYTKKDLKKMAAQGKAVAIYDNLVYDMSNYIRQNGGGLKAPDGVNLTAQDQADRQFMSDQVVSLFKYNSGKDITTLLDNLGSTIGTDVVDRQKTCLRNLFILGKLDTRDSAQCQFSTYILLALSCVMVAVIGFKFLSALHFGSVRAPESHDKFVICQVPCYTEGEESLRRTIDSLCKLRYDDKRKLILVICDGNIKGFGNDKPTPAIVLDILGVDVNSDPEPLSFQSLGEGAKQHNMGKVYAGLYECAGHVVPYLVVAKVGKPNERQKPGNRGKRDSQMLVMHFLNKVHFSAPMNPLELEMYHQIKNVIGVNPSFYEYLFMVDADTTVDEMSLNRLVSAMRHDKKIIGVCGETSIANAKQSIVTMSQVYEYFISHHLSKAFESLFGSITCLPGCFSMYRLRSPDTNKPLFISHGIIQDYSENRVDTLHLKNLLHLGEDRYLTTLVLKHFQDYKTKFVRHAYAKTVAPDSIKVLLSQRRRWINSTVHNLAELVFLDQLCGFCCFSMRFVVFIDLLSTIIAPVTVAYIVYLIYLIVHDGSSIPTLSIIMLAAIYGLQAMIFIFRMRWDMIAWMIFYICAIPVFSFLLPLYSFWKMDDFSWGSTRLVVGDKGKKIVIHDEGKFDPSSIPLRSWEEYENELWDQESVHSGSYMPPKAEYSYDYPRTRSTYSHGGYAYGQPIHPMQTRSTSPVSSRYQMSQFRQSPYQSPYQGPYGGSTADFRSSRMDMAHRPSLDDTSSFHQPYQPAPRPQSSYAFNLPDPSSDSFTAPAVDYLGAQAITDSQLERSIRKICANAELDKLTKKGVRKELEREYGVELTERREAINRLVEKVLTE.

The Myosin motor domain maps to 11–777 (LGVTDLSSLA…LFRFLEDRLR (767 aa)). 122–129 (GPTGSGKS) provides a ligand contact to ATP. N-linked (GlcNAc...) asparagine glycosylation is found at Asn510, Asn538, and Asn676. The tract at residues 655 to 677 (VDSLLKSFDQTQTWYIFALRPND) is actin-binding. Residues 798–817 (DPFSPHRYQPTSFDSQDHVY) are disordered. An N-linked (GlcNAc...) asparagine glycan is attached at Asn842. A run of 2 helical transmembrane segments spans residues 912–932 (WVWL…SKIA) and 951–971 (MIIW…GPVI). 3 N-linked (GlcNAc...) asparagine glycosylation sites follow: Asn1062, Asn1078, and Asn1146. A helical membrane pass occupies residues 1220–1240 (ILLALSCVMVAVIGFKFLSAL). Asn1583 carries N-linked (GlcNAc...) asparagine glycosylation. The next 3 helical transmembrane spans lie at 1615 to 1635 (LSTI…YLIV), 1641 to 1661 (IPTL…MIFI), and 1668 to 1688 (MIAW…LLPL). The disordered stretch occupies residues 1826-1847 (AHRPSLDDTSSFHQPYQPAPRP). The DEK-C domain maps to 1875 to 1930 (AITDSQLERSIRKICANAELDKLTKKGVRKELEREYGVELTERREAINRLVEKVLT).

The protein in the N-terminal section; belongs to the TRAFAC class CC myosin-kinesin ATPase superfamily. Myosin family. This sequence in the C-terminal section; belongs to the chitin synthase family. Class V subfamily.

It is found in the cell membrane. Its subcellular location is the cell septum. It localises to the cell tip. It catalyses the reaction [(1-&gt;4)-N-acetyl-beta-D-glucosaminyl](n) + UDP-N-acetyl-alpha-D-glucosamine = [(1-&gt;4)-N-acetyl-beta-D-glucosaminyl](n+1) + UDP + H(+). Functionally, polymerizes chitin, a structural polymer of the cell wall and septum, by transferring the sugar moiety of UDP-GlcNAc to the non-reducing end of the growing chitin polymer. Produces a large proportion of the chitin that is not deacetylated to chitosan. This is Chitin synthase 5 from Cryptococcus neoformans var. grubii serotype A (strain H99 / ATCC 208821 / CBS 10515 / FGSC 9487) (Filobasidiella neoformans var. grubii).